Reading from the N-terminus, the 389-residue chain is Gastricsin (389 aa).

The signal sequence occupies residues 1–16; that stretch reads MKWMVVVLLCLQLLEA. The propeptide at 17-59 is activation peptide; the sequence is KVVKVPLKKLKSLRETMKEKGLLEEFLKNHKYDPAQKYRYTDF. Positions 73–386 constitute a Peptidase A1 domain; sequence YFGEISIGTP…DMGNNRVGFA (314 aa). D91 is a catalytic residue. 2 cysteine pairs are disulfide-bonded: C104/C109 and C268/C272. The active site involves D277. C311 and C344 form a disulfide bridge.

Belongs to the peptidase A1 family.

It localises to the secreted. The catalysed reaction is More restricted specificity than pepsin A, but shows preferential cleavage at Tyr-|-Xaa bonds. High activity on hemoglobin.. Hydrolyzes a variety of proteins. The sequence is that of Gastricsin (PGC) from Rhinolophus ferrumequinum (Greater horseshoe bat).